The primary structure comprises 101 residues: NADH-quinone oxidoreductase subunit K (101 aa).

Transmembrane regions (helical) follow at residues 4 to 24 (LAHY…GIFL), 30 to 50 (IIIL…FVAF), and 61 to 81 (IFVF…LAIL).

This sequence belongs to the complex I subunit 4L family. In terms of assembly, NDH-1 is composed of 14 different subunits. Subunits NuoA, H, J, K, L, M, N constitute the membrane sector of the complex.

It is found in the cell inner membrane. The enzyme catalyses a quinone + NADH + 5 H(+)(in) = a quinol + NAD(+) + 4 H(+)(out). Functionally, NDH-1 shuttles electrons from NADH, via FMN and iron-sulfur (Fe-S) centers, to quinones in the respiratory chain. The immediate electron acceptor for the enzyme in this species is believed to be ubiquinone. Couples the redox reaction to proton translocation (for every two electrons transferred, four hydrogen ions are translocated across the cytoplasmic membrane), and thus conserves the redox energy in a proton gradient. This chain is NADH-quinone oxidoreductase subunit K, found in Burkholderia cenocepacia (strain HI2424).